The chain runs to 310 residues: MIIVTGGAGLIGSNIIKALNDRGHTDILVVDNLKDGTKFANLADLNIADYMDKEDFLIAILADEDFGNVEAVFHEGACSSTTEWDGKYMMDNNYQYSKELLHWCLEHQVPFLYASSAATYGGRNADFIEERQYEQPLNVYGYSKMLFDHYVRDILPEAQSQVCGFRYFNVYGPREGHKGSMASVAFHLNTQLKNGENPKLFAGSDGFKRDFIYVEDVASVNLWFWENAVSGIFNCGTGRAESFQEVADAALKYHQSGDIEYIPFPDKLKGRYQEFTLADLTKLRAAGYDKPFKTVAEGVADYMAWLNRNA.

NADP(+) contacts are provided by residues 10 to 11 (LI), 31 to 32 (DN), lysine 38, lysine 53, 75 to 79 (EGACS), and asparagine 92. Residue tyrosine 140 is the Proton acceptor of the active site. Lysine 144 contributes to the NADP(+) binding site. Asparagine 169 lines the substrate pocket. Residues valine 170 and lysine 178 each contribute to the NADP(+) site. Catalysis depends on lysine 178, which acts as the Proton acceptor. Substrate contacts are provided by residues serine 180, histidine 187, 201 to 204 (FAGS), arginine 209, and tyrosine 272.

This sequence belongs to the NAD(P)-dependent epimerase/dehydratase family. HldD subfamily. Homopentamer. It depends on NADP(+) as a cofactor.

It catalyses the reaction ADP-D-glycero-beta-D-manno-heptose = ADP-L-glycero-beta-D-manno-heptose. It functions in the pathway nucleotide-sugar biosynthesis; ADP-L-glycero-beta-D-manno-heptose biosynthesis; ADP-L-glycero-beta-D-manno-heptose from D-glycero-beta-D-manno-heptose 7-phosphate: step 4/4. Its function is as follows. Catalyzes the interconversion between ADP-D-glycero-beta-D-manno-heptose and ADP-L-glycero-beta-D-manno-heptose via an epimerization at carbon 6 of the heptose. The sequence is that of ADP-L-glycero-D-manno-heptose-6-epimerase from Erwinia tasmaniensis (strain DSM 17950 / CFBP 7177 / CIP 109463 / NCPPB 4357 / Et1/99).